The primary structure comprises 156 residues: Small ribosomal subunit protein uS7 (156 aa).

Belongs to the universal ribosomal protein uS7 family. Part of the 30S ribosomal subunit. Contacts proteins S9 and S11.

Its function is as follows. One of the primary rRNA binding proteins, it binds directly to 16S rRNA where it nucleates assembly of the head domain of the 30S subunit. Is located at the subunit interface close to the decoding center, probably blocks exit of the E-site tRNA. The protein is Small ribosomal subunit protein uS7 of Finegoldia magna (strain ATCC 29328 / DSM 20472 / WAL 2508) (Peptostreptococcus magnus).